Here is a 357-residue protein sequence, read N- to C-terminus: G-protein coupled receptor 183 (357 aa).

Topologically, residues 1-27 (MANNFTTPLATSHGNNCDLYAHHSTAR) are extracellular. A glycan (N-linked (GlcNAc...) asparagine) is linked at N4. The helical transmembrane segment at 28-53 (VLMPLHYSLVFIIGLVGNLLALVVIV) threads the bilayer. Residues 54 to 73 (QNRKKINSTTLYSMNLVISD) lie on the Cytoplasmic side of the membrane. A helical transmembrane segment spans residues 74-91 (ILFTTALPTRIAYYALGF). R83 serves as a coordination point for 7alpha,25-dihydroxycholesterol. Topologically, residues 92 to 101 (DWRIGDALCR) are extracellular. A disulfide bridge links C100 with C177. The helical transmembrane segment at 102-123 (VTALVFYINTYAGVNFMTCLSI) threads the bilayer. 7alpha,25-dihydroxycholesterol-binding residues include Y108 and Y112. The tract at residues 122–130 (SIDRFFAVV) is interaction with G proteins. Residues 124 to 145 (DRFFAVVHPLRYNKIKRIEYAK) are Cytoplasmic-facing. The chain crosses the membrane as a helical span at residues 146–164 (GVCLSVWILVFAQTLPLLL). Residues 165–188 (TPMSKEEGDKTTCMEYPNFEGTAS) are Extracellular-facing. A helical membrane pass occupies residues 189–211 (LPWILLGACLLGYVLPITVILLC). The Cytoplasmic segment spans residues 212 to 237 (YSQICCKLFRTAKQNPLTEKSGVNKK). The chain crosses the membrane as a helical span at residues 238 to 261 (ALNTIILIIVVFILCFTPYHVAII). Position 256 (Y256) interacts with 7alpha,25-dihydroxycholesterol. Topologically, residues 262-283 (QHMIKMLCSPGALECGARHSFQ) are extracellular. A helical transmembrane segment spans residues 284–308 (ISLHFTVCLMNFNCCMDPFIYFFAC). The Cytoplasmic segment spans residues 309 to 357 (KGYKRKVMKMLKRQVSVSISSAVRSAPEENSREMTESQMMIHSKASNGR). A phosphoserine mark is found at S324 and S345. The segment at 336-357 (EENSREMTESQMMIHSKASNGR) is disordered. The span at 344–357 (ESQMMIHSKASNGR) shows a compositional bias: polar residues.

The protein belongs to the G-protein coupled receptor 1 family. In terms of assembly, homodimer and heterodimer. Heterodimerizes with CXCR5; leading to modulate the interaction between of CXCL13 and CXCR5. Expressed in mature B-cells and increases in expression early after activation, before being down-regulated in germinal center B-cells. Expressed in astrocytes. Specifically expressed in CD4(+) dendritic cells but not in CD8(+) dendritic cells. Expressed in monocyte/osteoclasts precursors and mature osteoclasts.

The protein localises to the cell membrane. In terms of biological role, G-protein coupled receptor expressed in lymphocytes that acts as a chemotactic receptor for B-cells, T-cells, splenic dendritic cells, monocytes/macrophages and astrocytes. Receptor for oxysterol 7-alpha,25-dihydroxycholesterol (7-alpha,25-OHC) and other related oxysterols. Mediates cell positioning and movement of a number of cells by binding the 7-alpha,25-OHC ligand that forms a chemotactic gradient. Binding of 7-alpha,25-OHC mediates the correct localization of B-cells during humoral immune responses. Collaborates with CXCR5 to mediate B-cell migration; probably by forming a heterodimer with CXCR5 that affects the interaction between of CXCL13 and CXCR5. Guides B-cell movement along the B-cell zone-T-cell zone boundary and later to interfollicular and outer follicular regions. Its specific expression during B-cell maturation helps position B-cells appropriately for mounting T-dependent antibody responses. Also acts as a chemotactic receptor for some T-cells upon binding to 7-alpha,25-OHC ligand. Promotes follicular helper T (Tfh) cells differentiation by positioning activated T-cells at the follicle-T-zone interface, promoting contact of newly activated CD4 T-cells with activated dendritic cells and exposing them to Tfh-cell-promoting inducible costimulator (ICOS) ligand. Expression in splenic dendritic cells is required for their homeostasis, localization and ability to induce B- and T-cell responses: GPR183 acts as a chemotactic receptor in dendritic cells that mediates the accumulation of CD4(+) dendritic cells in bridging channels. Regulates migration of astrocytes and is involved in communication between astrocytes and macrophages. Promotes osteoclast precursor migration to bone surfaces. Signals constitutively through G(i)-alpha, but not G(s)-alpha or G(q)-alpha. Signals constitutively also via MAPK1/3 (ERK1/2). The protein is G-protein coupled receptor 183 of Mus musculus (Mouse).